An 80-amino-acid polypeptide reads, in one-letter code: Raniseptin-8 (80 aa).

An N-terminal signal peptide occupies residues 1–22; sequence MAFLKKSLFLVLFLGIVSLSIC. Residues 23–49 constitute a propeptide that is removed on maturation; the sequence is EEEKREGEEEEKQEEENEELSEEELRE. Residues 27-46 are disordered; it reads REGEEEEKQEEENEELSEEE. The span at 30 to 44 shows a compositional bias: acidic residues; the sequence is EEEEKQEEENEELSE.

This sequence belongs to the frog skin active peptide (FSAP) family. Dermaseptin subfamily. As to expression, expressed by the skin glands.

Its subcellular location is the secreted. In terms of biological role, has antibacterial activity. This is Raniseptin-8 from Boana raniceps (Chaco tree frog).